The chain runs to 1203 residues: MTRSPPLRELPPSYTPPARTAAPQILAGSLKAPLWLRAYFQGLLFSLGCGIQRHCGKVLFLGLLAFGALALGLRMAIIETNLEQLWVEVGSRVSQELHYTKEKLGEEAAYTSQMLIQTARQEGENILTPEALGLHLQAALTASKVQVSLYGKSWDLNKICYKSGVPLIENGMIERMIEKLFPCVILTPLDCFWEGAKLQGGSAYLPGRPDIQWTNLDPEQLLEELGPFASLEGFRELLDKAQVGQAYVGRPCLHPDDLHCPPSAPNHHSRQAPNVAHELSGGCHGFSHKFMHWQEELLLGGMARDPQGELLRAEALQSTFLLMSPRQLYEHFRGDYQTHDIGWSEEQASTVLQAWQRRFVQLAQEALPENASQQIHAFSSTTLDDILHAFSEVSAARVVGGYLLMLAYACVTMLRWDCAQSQGSVGLAGVLLVALAVASGLGLCALLGITFNAATTQVLPFLALGIGVDDVFLLAHAFTEALPGTPLQERMGECLQRTGTSVVLTSINNMAAFLMAALVPIPALRAFSLQAAIVVGCTFVAVMLVFPAILSLDLRRRHCQRLDVLCCFSSPCSAQVIQILPQELGDGTVPVGIAHLTATVQAFTHCEASSQHVVTILPPQAHLVPPPSDPLGSELFSPGGSTRDLLGQEEETRQKAACKSLPCARWNLAHFARYQFAPLLLQSHAKAIVLVLFGALLGLSLYGATLVQDGLALTDVVPRGTKEHAFLSAQLRYFSLYEVALVTQGGFDYAHSQRALFDLHQRFSSLKAVLPPPATQAPRTWLHYYRNWLQGIQAAFDQDWASGRITRHSYRNGSEDGALAYKLLIQTGDAQEPLDFSQLTTRKLVDREGLIPPELFYMGLTVWVSSDPLGLAASQANFYPPPPEWLHDKYDTTGENLRIPPAQPLEFAQFPFLLRGLQKTADFVEAIEGARAACAEAGQAGVHAYPSGSPFLFWEQYLGLRRCFLLAVCILLVCTFLVCALLLLNPWTAGLIVLVLAMMTVELFGIMGFLGIKLSAIPVVILVASVGIGVEFTVHVALGFLTTQGSRNLRAAHALEHTFAPVTDGAISTLLGLLMLAGSHFDFIVRYFFAALTVLTLLGLLHGLVLLPVLLSILGPPPEVIQMYKESPEILSPPAPQGGGLRWGASSSLPQSFARVTTSMTVAIHPPPLPGAYIHPAPDEPPWSPAATSSGNLSSRGPGPATG.

The Cytoplasmic portion of the chain corresponds to 1–57; the sequence is MTRSPPLRELPPSYTPPARTAAPQILAGSLKAPLWLRAYFQGLLFSLGCGIQRHCGK. A helical membrane pass occupies residues 58-78; that stretch reads VLFLGLLAFGALALGLRMAII. Residues 79–392 are Extracellular-facing; it reads ETNLEQLWVE…LDDILHAFSE (314 aa). A glycan (N-linked (GlcNAc...) asparagine) is linked at Asn-370. A helical transmembrane segment spans residues 393–413; it reads VSAARVVGGYLLMLAYACVTM. In terms of domain architecture, SSD spans 394-552; it reads SAARVVGGYL…MLVFPAILSL (159 aa). The Cytoplasmic segment spans residues 414 to 428; that stretch reads LRWDCAQSQGSVGLA. The helical transmembrane segment at 429 to 449 threads the bilayer; that stretch reads GVLLVALAVASGLGLCALLGI. The Extracellular segment spans residues 450 to 457; the sequence is TFNAATTQ. Residues 458-478 traverse the membrane as a helical segment; the sequence is VLPFLALGIGVDDVFLLAHAF. Topologically, residues 479–501 are cytoplasmic; that stretch reads TEALPGTPLQERMGECLQRTGTS. The helical transmembrane segment at 502 to 522 threads the bilayer; it reads VVLTSINNMAAFLMAALVPIP. Topologically, residues 523–531 are extracellular; it reads ALRAFSLQA. A helical transmembrane segment spans residues 532-552; sequence AIVVGCTFVAVMLVFPAILSL. At 553-686 the chain is on the cytoplasmic side; sequence DLRRRHCQRL…APLLLQSHAK (134 aa). Residues 687–707 traverse the membrane as a helical segment; the sequence is AIVLVLFGALLGLSLYGATLV. The Extracellular segment spans residues 708–963; the sequence is QDGLALTDVV…WEQYLGLRRC (256 aa). N-linked (GlcNAc...) asparagine glycosylation is present at Asn-812. The chain crosses the membrane as a helical span at residues 964 to 984; that stretch reads FLLAVCILLVCTFLVCALLLL. Residues 985–991 lie on the Cytoplasmic side of the membrane; it reads NPWTAGL. Residues 992 to 1012 traverse the membrane as a helical segment; the sequence is IVLVLAMMTVELFGIMGFLGI. Position 1013 (Lys-1013) is a topological domain, extracellular. Residues 1014–1034 traverse the membrane as a helical segment; it reads LSAIPVVILVASVGIGVEFTV. Over 1035-1064 the chain is Cytoplasmic; the sequence is HVALGFLTTQGSRNLRAAHALEHTFAPVTD. A helical membrane pass occupies residues 1065–1085; that stretch reads GAISTLLGLLMLAGSHFDFIV. The Extracellular segment spans residues 1086–1093; it reads RYFFAALT. A helical transmembrane segment spans residues 1094–1114; the sequence is VLTLLGLLHGLVLLPVLLSIL. The Cytoplasmic segment spans residues 1115–1203; that stretch reads GPPPEVIQMY…SSRGPGPATG (89 aa). The segment at 1171–1203 is disordered; the sequence is GAYIHPAPDEPPWSPAATSSGNLSSRGPGPATG. Residues 1186–1195 show a composition bias toward polar residues; that stretch reads AATSSGNLSS.

The protein belongs to the patched family.

Its subcellular location is the membrane. Functionally, plays a role in the control of cellular growth. May have a role in epidermal development. May act as a receptor for Sonic hedgehog (SHH). The polypeptide is Protein patched homolog 2 (PTCH2) (Homo sapiens (Human)).